Reading from the N-terminus, the 349-residue chain is D-arabinitol dehydrogenase 1 (349 aa).

Zn(2+) is bound by residues Cys46, His67, Cys97, Cys100, Cys103, Cys111, and Glu151.

This sequence belongs to the zinc-containing alcohol dehydrogenase family. Requires Zn(2+) as cofactor.

The protein resides in the cell projection. The enzyme catalyses D-arabinitol + NADP(+) = D-xylulose + NADPH + H(+). It carries out the reaction D-arabinitol + NADP(+) = D-ribulose + NADPH + H(+). Its function is as follows. D-arabinitol dehydrogenase which mostly produces D-arabinitol in haustoria, the appendages of the parasitic fungus that penetrate the host's tissue and draws nutrients from it. D-arabinitol accumulation may serve as a carbohydrate storage compound. D-arabinitol is also capable of quenching reactive oxygen species involved in host plant defense reactions, thus providing protection for the rust fungus during the pathogenic interaction. This is D-arabinitol dehydrogenase 1 (ARD1) from Uromyces fabae (Rust fungus).